The chain runs to 788 residues: MRVPESWLREFVDLDWDIEQIAERLTFSGTSVEDILRPFNVSGEIITARVIERFDHPASEKLIVCKVDTGKRIYTVITADKTVNEGDYVILALEGATLNNGLKIEPREFKGVISEGMLCSLEELGLEEKSDRVYRFPDPVELGVNVVEEYGLNERVLDIEITPNRPDCLSIIGVARELSALSGRPLNKPQPDVSFVDEDVQFDVEIEDVEGCPRYSARIMKGVTVKDSPLWMKARLVAAGVRSLNNVVDATNYVMIELGHPVHAFDLNRLKNKRIVVKSAKGGERVLLLDEKEYELKGGEVLITDGENVLALGGIMGGMESGVYDDTRDLVLEVAYFDPVRIRKAAKALGISSESSYRFERGVDPNDVELVSLRLAELIQKLAGGYVLRKFWDVYPRKIEPKKVMLRKARIEKILGTKVEEPGDILRRLEFQVEDRGDSYEVLVPTFRPDVEREIDLIEEIGRIYGYEKVESKVISVPAVNRGWGEKQLFRREISQFMKGMGFDEVVTFSFVDSQKVKKWPLVDREPIALSNPIASDMDVMRTSQFYSLIQVLAENFKRQNRDLKLFEIGKIYFKENGNFREIETLSAMSCGLENPGDYTDKRSVSFYTIKGVLDELFFRLGVNVVYRAAEIPGLFPTRSARIYVENREIGFIGMVDPKLLDEYDVKEDTYFFEIDMELLRKYASKRPAYRPTPRFPAVRRDISFLLPKGFESVKIIELFKKSGGDLVEEVGVFDIYEGKGIPENMVSVTLYVVFRHPERTLTDEEVNKIFEEMVQKAEREFGIRRRF.

The 109-residue stretch at Phe-39–Val-147 folds into the tRNA-binding domain. The B5 domain maps to Ile-399–Ser-472. Residues Asp-450, Asp-456, Glu-459, and Glu-460 each contribute to the Mg(2+) site. Residues Pro-694 to Arg-787 form the FDX-ACB domain.

The protein belongs to the phenylalanyl-tRNA synthetase beta subunit family. Type 1 subfamily. In terms of assembly, tetramer of two alpha and two beta subunits. Requires Mg(2+) as cofactor.

The protein resides in the cytoplasm. It carries out the reaction tRNA(Phe) + L-phenylalanine + ATP = L-phenylalanyl-tRNA(Phe) + AMP + diphosphate + H(+). The chain is Phenylalanine--tRNA ligase beta subunit (pheT) from Thermotoga maritima (strain ATCC 43589 / DSM 3109 / JCM 10099 / NBRC 100826 / MSB8).